The sequence spans 138 residues: Acidic phospholipase A2 PePLA2 (138 aa).

A signal peptide spans 1 to 16 (MRTLWIMAVLLLGVEG). 7 disulfide bridges follow: C42–C131, C44–C60, C59–C110, C65–C138, C66–C103, C73–C97, and C91–C101. Ca(2+) contacts are provided by Y43, G45, and G47. The active site involves H63. Ca(2+) is bound at residue D64. D104 is an active-site residue.

The protein belongs to the phospholipase A2 family. Group II subfamily. D49 sub-subfamily. The cofactor is Ca(2+). In terms of tissue distribution, expressed by the venom gland.

The protein localises to the secreted. The catalysed reaction is a 1,2-diacyl-sn-glycero-3-phosphocholine + H2O = a 1-acyl-sn-glycero-3-phosphocholine + a fatty acid + H(+). In terms of biological role, PLA2 catalyzes the calcium-dependent hydrolysis of the 2-acyl groups in 3-sn-phosphoglycerides. This Protobothrops elegans (Elegant pitviper) protein is Acidic phospholipase A2 PePLA2.